We begin with the raw amino-acid sequence, 340 residues long: MWVAVDAMSGDYGPEGIVEGAVLAVREFGLSVSLVGDEQELLDILLKFDYDTEKIRVIHSTEIIGMNDSPSIAVRAMEDSSVVKAVRLVADKECIGVFSPGNTGATMAAALLHLGRLPGVLRPPIAAPIPREEGPPVILLDAGANVDCKPEYLAQFAIMGEIYSRELFGVKNPKVGILSNGEEDKKGNTVSVKTFDLLKKIPFNFVGNVEGRDLYGSGRDVDVVVCDGFIGNIVLKATEGLAKSIFNVLRNSIRQSSLAQTGALLLKSTFTAVKKRLDYAEYGGALLLGVEGICMIGHGSSNALAVKNAVRVISECAKHQINERIRERLGEYKTILGDSN.

The protein belongs to the PlsX family. In terms of assembly, homodimer. Probably interacts with PlsY.

It is found in the cytoplasm. It carries out the reaction a fatty acyl-[ACP] + phosphate = an acyl phosphate + holo-[ACP]. It participates in lipid metabolism; phospholipid metabolism. In terms of biological role, catalyzes the reversible formation of acyl-phosphate (acyl-PO(4)) from acyl-[acyl-carrier-protein] (acyl-ACP). This enzyme utilizes acyl-ACP as fatty acyl donor, but not acyl-CoA. This chain is Phosphate acyltransferase, found in Leptospira biflexa serovar Patoc (strain Patoc 1 / ATCC 23582 / Paris).